The chain runs to 123 residues: ATP synthase epsilon chain (123 aa).

This sequence belongs to the ATPase epsilon chain family. As to quaternary structure, F-type ATPases have 2 components, CF(1) - the catalytic core - and CF(0) - the membrane proton channel. CF(1) has five subunits: alpha(3), beta(3), gamma(1), delta(1), epsilon(1). CF(0) has three main subunits: a, b and c.

Its subcellular location is the cell inner membrane. Its function is as follows. Produces ATP from ADP in the presence of a proton gradient across the membrane. The sequence is that of ATP synthase epsilon chain from Helicobacter acinonychis (strain Sheeba).